The chain runs to 243 residues: Carboxy-S-adenosyl-L-methionine synthase (243 aa).

S-adenosyl-L-methionine contacts are provided by residues Tyr40, 65-67 (GCS), 90-91 (DN), 118-119 (DI), Asn133, and Arg200.

The protein belongs to the class I-like SAM-binding methyltransferase superfamily. Cx-SAM synthase family. In terms of assembly, homodimer.

The catalysed reaction is prephenate + S-adenosyl-L-methionine = carboxy-S-adenosyl-L-methionine + 3-phenylpyruvate + H2O. Catalyzes the conversion of S-adenosyl-L-methionine (SAM) to carboxy-S-adenosyl-L-methionine (Cx-SAM). The chain is Carboxy-S-adenosyl-L-methionine synthase from Shewanella halifaxensis (strain HAW-EB4).